The chain runs to 198 residues: Syndecan-4 (198 aa).

The first 18 residues, 1-18 (MAPARLFALLLFFVGGVA), serve as a signal peptide directing secretion. The Extracellular segment spans residues 19–145 (ESIRETEVID…QGSNIFERTE (127 aa)). 3 O-linked (Xyl...) (glycosaminoglycan) serine glycosylation sites follow: Ser-39, Ser-61, and Ser-63. O-linked (Xyl...) (chondroitin sulfate) serine glycosylation is present at Ser-95. The helical transmembrane segment at 146–170 (VLAALIVGGIVGILFAVFLILLLMY) threads the bilayer. The Cytoplasmic segment spans residues 171–198 (RMKKKDEGSYDLGKKPIYKKAPTNEFYA).

It belongs to the syndecan proteoglycan family. Homodimer. Interacts (via its cytoplasmic domain) with GIPC (via its PDZ domain). Interacts (via its cytoplasmic domain) with NUDT16L1. Interacts with CDCP1 and SDCBP. Interacts with DNM2; this interaction is markedly enhanced at focal ahesion site upon induction of focal adhesions and stress-fiber formation. Shedding is enhanced by a number of factors such as heparanase, thrombin or EGF. Also by stress and wound healing. PMA-mediated shedding is inhibited by TIMP3. In terms of processing, O-glycosylated; contains both chondroitin sulfate and heparan sulfate. Ser-39, Ser-61 and Ser-63 can all be modified by either chondroitin sulfate or heparan sulfate, and the protein exists in forms that contain only chondroitin sulfate, only heparan sulfate and both chondroitin sulfate and heparan sulfate. Detected in fibroblasts (at protein level). Also expressed in epithelial cells.

It localises to the membrane. The protein localises to the secreted. Its function is as follows. Cell surface proteoglycan which regulates exosome biogenesis in concert with SDCBP and PDCD6IP. This chain is Syndecan-4, found in Homo sapiens (Human).